Consider the following 377-residue polypeptide: Chaperone protein DnaJ (377 aa).

The region spanning Asp4 to Gly69 is the J domain. The CR-type zinc finger occupies Gly135 to Glu213. Zn(2+) is bound by residues Cys148, Cys151, Cys165, Cys168, Cys187, Cys190, Cys201, and Cys204. CXXCXGXG motif repeat units lie at residues Cys148 to Gly155, Cys165 to Gly172, Cys187 to Gly194, and Cys201 to Gly208.

The protein belongs to the DnaJ family. In terms of assembly, homodimer. Requires Zn(2+) as cofactor.

Its subcellular location is the cytoplasm. Participates actively in the response to hyperosmotic and heat shock by preventing the aggregation of stress-denatured proteins and by disaggregating proteins, also in an autonomous, DnaK-independent fashion. Unfolded proteins bind initially to DnaJ; upon interaction with the DnaJ-bound protein, DnaK hydrolyzes its bound ATP, resulting in the formation of a stable complex. GrpE releases ADP from DnaK; ATP binding to DnaK triggers the release of the substrate protein, thus completing the reaction cycle. Several rounds of ATP-dependent interactions between DnaJ, DnaK and GrpE are required for fully efficient folding. Also involved, together with DnaK and GrpE, in the DNA replication of plasmids through activation of initiation proteins. The chain is Chaperone protein DnaJ from Brucella canis (strain ATCC 23365 / NCTC 10854 / RM-666).